The primary structure comprises 545 residues: Chaperonin GroEL 2 (545 aa).

ATP-binding positions include 30-33 (TLGP), lysine 51, 87-91 (DGTTT), glycine 415, and aspartate 494. The interval 526-545 (EKGAGMPGMPPGGGYPGMGM) is disordered. Positions 536–545 (PGGGYPGMGM) are enriched in gly residues.

Belongs to the chaperonin (HSP60) family. As to quaternary structure, forms a cylinder of 14 subunits composed of two heptameric rings stacked back-to-back. Interacts with the co-chaperonin GroES.

The protein localises to the cytoplasm. The enzyme catalyses ATP + H2O + a folded polypeptide = ADP + phosphate + an unfolded polypeptide.. Together with its co-chaperonin GroES, plays an essential role in assisting protein folding. The GroEL-GroES system forms a nano-cage that allows encapsulation of the non-native substrate proteins and provides a physical environment optimized to promote and accelerate protein folding. The polypeptide is Chaperonin GroEL 2 (Syntrophus aciditrophicus (strain SB)).